Consider the following 332-residue polypeptide: Holliday junction branch migration complex subunit RuvB (332 aa).

A large ATPase domain (RuvB-L) region spans residues 1–181 (MSRILDNEMM…FGITGHMEYY (181 aa)). ATP-binding positions include Leu-20, Arg-21, Gly-62, Lys-65, Thr-66, Thr-67, 128 to 130 (EDF), Arg-171, Tyr-181, and Arg-218. Thr-66 provides a ligand contact to Mg(2+). The segment at 182 to 252 (AHADLTEIVE…ITDKALTMLD (71 aa)) is small ATPAse domain (RuvB-S). The head domain (RuvB-H) stretch occupies residues 255–332 (HEGLDYVDQK…EHLGYEYSEK (78 aa)). Arg-291, Arg-310, Arg-312, and Arg-315 together coordinate DNA.

Belongs to the RuvB family. As to quaternary structure, homohexamer. Forms an RuvA(8)-RuvB(12)-Holliday junction (HJ) complex. HJ DNA is sandwiched between 2 RuvA tetramers; dsDNA enters through RuvA and exits via RuvB. An RuvB hexamer assembles on each DNA strand where it exits the tetramer. Each RuvB hexamer is contacted by two RuvA subunits (via domain III) on 2 adjacent RuvB subunits; this complex drives branch migration. In the full resolvosome a probable DNA-RuvA(4)-RuvB(12)-RuvC(2) complex forms which resolves the HJ.

Its subcellular location is the cytoplasm. The catalysed reaction is ATP + H2O = ADP + phosphate + H(+). Functionally, the RuvA-RuvB-RuvC complex processes Holliday junction (HJ) DNA during genetic recombination and DNA repair, while the RuvA-RuvB complex plays an important role in the rescue of blocked DNA replication forks via replication fork reversal (RFR). RuvA specifically binds to HJ cruciform DNA, conferring on it an open structure. The RuvB hexamer acts as an ATP-dependent pump, pulling dsDNA into and through the RuvAB complex. RuvB forms 2 homohexamers on either side of HJ DNA bound by 1 or 2 RuvA tetramers; 4 subunits per hexamer contact DNA at a time. Coordinated motions by a converter formed by DNA-disengaged RuvB subunits stimulates ATP hydrolysis and nucleotide exchange. Immobilization of the converter enables RuvB to convert the ATP-contained energy into a lever motion, pulling 2 nucleotides of DNA out of the RuvA tetramer per ATP hydrolyzed, thus driving DNA branch migration. The RuvB motors rotate together with the DNA substrate, which together with the progressing nucleotide cycle form the mechanistic basis for DNA recombination by continuous HJ branch migration. Branch migration allows RuvC to scan DNA until it finds its consensus sequence, where it cleaves and resolves cruciform DNA. The chain is Holliday junction branch migration complex subunit RuvB from Streptococcus pneumoniae serotype 4 (strain ATCC BAA-334 / TIGR4).